The following is a 167-amino-acid chain: Biogenesis of lysosome-related organelles complex 1 subunit 6 (167 aa).

Over residues 1-11 (MLKSSNINSVL) the composition is skewed to polar residues. The interval 1 to 38 (MLKSSNINSVLNELPNDPARDSTAQSSHNGKPKQDAET) is disordered. Positions 102 to 160 (ARLNDMMSDVKRYKDKLTKIKKEMQGVYQRTKELKKRAANVAACKQRDYQRKLERLQHE) form a coiled coil.

The protein belongs to the BLOC1S6 family. In terms of assembly, component of the biogenesis of lysosome-related organelles complex-1 (BLOC-1) composed of Blos1, Blos2, Blos3, Blos4, Dysb, Muted, Pldn and Snapin. Interacts with Blos1, Blos4 and Dysb.

The protein localises to the synapse. The protein resides in the cytoplasm. It localises to the cytoskeleton. Its subcellular location is the myofibril. It is found in the sarcomere. The protein localises to the z line. Its function is as follows. Component of the biogenesis of lysosome-related organelles complex-1 (BLOC-1) involved in pigment granule biogenesis and membrane trafficking in synapses. In response to high synaptic activity at neuromuscular junctions, plays a key role in promoting efficient synaptic vesicle recycling and re-formation through early endosomes. The protein is Biogenesis of lysosome-related organelles complex 1 subunit 6 of Drosophila melanogaster (Fruit fly).